The sequence spans 32 residues: Conotoxin pr6b (32 aa).

Residues Pro6, Pro13, Pro20, and Pro29 each carry the 4-hydroxyproline modification. 3 disulfide bridges follow: Cys7–Cys18, Cys14–Cys23, and Cys17–Cys31.

In terms of tissue distribution, expressed by the venom duct.

Its subcellular location is the secreted. Its function is as follows. Intraperitoneal injection into fish (0.5 nmol) provokes vertical suspension and paralysis after 6 minutes. In Conus parius (Cone snail), this protein is Conotoxin pr6b.